We begin with the raw amino-acid sequence, 299 residues long: uncharacterized protein (299 aa).

Residues 1–44 (MSDSNLTNPIKAFFHDEFPEQYQEPPGLQKNMKPVPDCGEKSYK) form a disordered region. 55–79 (LVTGGDSGIGRAAAIAYAREGADVA) is an NADP(+) binding site. S188 contacts substrate. Residue Y201 is the Proton acceptor of the active site.

Belongs to the short-chain dehydrogenases/reductases (SDR) family.

This is an uncharacterized protein from Bacillus subtilis (strain 168).